A 300-amino-acid polypeptide reads, in one-letter code: MTKQKVCPVCGSTEFIYDPERGEIVCARCGYVIEENIIDMGPEWRAFDASQREKRSRTGAPESILLHDKGLSTDIGIDRSLTGLMREKMYRLRKWQSRLRVSDAAERNLAFALSELDRITAQLKLPKHVEEEAARLYREAVRKGLIRGRSIESVIAACVYAACRLLKVPRTLDEISDIARVEKKEIGRSYRFIARNLNLTPKKLFVKPTDYVNKFADELGLSEKVRRRAIEILEEAYRRGLTSGKSPAGLVAAALYIASLLEGEKRTQREVAEVARVTEVTVRNRYKELVEKLGIKVPIT.

The TFIIB-type zinc finger occupies 2 to 34; sequence TKQKVCPVCGSTEFIYDPERGEIVCARCGYVIE. Residues cysteine 7, cysteine 10, cysteine 26, and cysteine 29 each contribute to the Zn(2+) site. 2 tandem repeats follow at residues 114-197 and 210-291.

This sequence belongs to the TFIIB family.

Functionally, stabilizes TBP binding to an archaeal box-A promoter. Also responsible for recruiting RNA polymerase II to the pre-initiation complex (DNA-TBP-TFIIB). In Pyrococcus horikoshii (strain ATCC 700860 / DSM 12428 / JCM 9974 / NBRC 100139 / OT-3), this protein is Transcription initiation factor IIB.